We begin with the raw amino-acid sequence, 840 residues long: Heat shock 70 kDa protein 4 (840 aa).

N6-acetyllysine is present on K53. Position 76 is a phosphoserine (S76). Residues Y89 and Y336 each carry the phosphotyrosine modification. A phosphoserine mark is found at S393 and S415. K430 is subject to N6-acetyllysine. The interval 500-575 is disordered; sequence VHKSEESEEP…QAKKAKVKTS (76 aa). A compositionally biased stretch (basic and acidic residues) spans 514–533; that stretch reads QNAKEEEKMQVDQEEPHTEE. At T538 the chain carries Phosphothreonine. Phosphoserine is present on S546. At Y660 the chain carries Phosphotyrosine. The residue at position 756 (S756) is a Phosphoserine. An N6-methyllysine modification is found at K773. The segment at 781–840 is disordered; sequence PIISKPKPKVEPPKEEPKHAEQNGPVDGQGDNPGTQAAEHGADTAVPSDGDKKLPEMDID. Basic and acidic residues-rich tracts occupy residues 788-801 and 829-840; these read PKVE…KHAE and DGDKKLPEMDID.

The protein belongs to the heat shock protein 70 family. Interacts with TJP1/ZO-1. Ubiquitous. Highly expressed in testis.

It localises to the cytoplasm. In Rattus norvegicus (Rat), this protein is Heat shock 70 kDa protein 4 (Hspa4).